A 248-amino-acid polypeptide reads, in one-letter code: Large ribosomal subunit protein uL4 (248 aa).

Disordered regions lie at residues 48-95 (GTHK…GPVP) and 210-248 (AFSE…RTGA). Residues 233-248 (DATKARSSRHDDRTGA) show a composition bias toward basic and acidic residues.

Belongs to the universal ribosomal protein uL4 family. In terms of assembly, part of the 50S ribosomal subunit.

One of the primary rRNA binding proteins, this protein initially binds near the 5'-end of the 23S rRNA. It is important during the early stages of 50S assembly. It makes multiple contacts with different domains of the 23S rRNA in the assembled 50S subunit and ribosome. Functionally, forms part of the polypeptide exit tunnel. The polypeptide is Large ribosomal subunit protein uL4 (Tropheryma whipplei (strain TW08/27) (Whipple's bacillus)).